We begin with the raw amino-acid sequence, 868 residues long: Coatomer subunit gamma (868 aa).

A compositionally biased stretch (basic residues) spans 1 to 11 (MWRTKRGRTRR). The interval 1 to 22 (MWRTKRGRTRRRDAGGNPWQNL) is disordered. 4 HEAT repeats span residues 64–101 (REAT…IADD), 287–324 (RELS…LHPP), 326–359 (VNVC…GAES), and 360–396 (SVER…KFPR).

This sequence belongs to the COPG family. As to quaternary structure, oligomeric complex that consists of at least the alpha, beta, beta', gamma, delta, epsilon and zeta subunits.

It is found in the cytoplasm. It localises to the golgi apparatus membrane. Its subcellular location is the cytoplasmic vesicle. The protein resides in the COPI-coated vesicle membrane. The protein localises to the endoplasmic reticulum. In terms of biological role, the coatomer is a cytosolic protein complex that binds to dilysine motifs and reversibly associates with Golgi non-clathrin-coated vesicles, which further mediate biosynthetic protein transport from the ER, via the Golgi up to the trans Golgi network. Coatomer complex is required for budding from Golgi membranes, and is essential for the retrograde Golgi-to-ER transport of dilysine-tagged proteins. This is Coatomer subunit gamma from Anopheles gambiae (African malaria mosquito).